The following is a 617-amino-acid chain: MRIGLLAFAVAARYVEALPVASGEEVASSSAPTTLPSTSSSSALPSPTKYTLPHEDPNPEARKAEIALKRGGFLYGPSTLGQTTFYPSGTLGTAMSQRDQALWLRDAENQTITAYREANETLRDIQSHGGLKTLDDFALLYDGHWKASVPEGIEKGMLSNYTSDLLFSMERLSNNPYSLKRLHPTKDKLPFSVEDKVVKQLTATTLAALHKAGRLFFVDHSDQKKYTPQAGRYAAACQGLFYVDARSNQFLPLAIKTNVGADLTYTPLDDKNDWLLAKIMFNNNDLFYSQMYHVLFHTVPEIVHMAAIRTLSESHPVLAVLNRIMYQAYAIRPVGERILFNPGGFWDQNLGLPATAAVDFLSSIYAHGEGGFRAGYVENNLRKRGLVGDTFGGPALPHFPFYEDAQRVLGAIRGFMQAFVDSTYGGDDGALARDFELQDWVAEANGPAQVRDFPTAPLRRREELVGILTHIAWNTGGAHHVLNQGAPVRASGVLPLHPAALYAPVPAAKGAVASSDGLLAWLPDEVKSVEQVSLLARFNRAQVRDRNQTVRNMFAAPELLAGNGEAYAAANARFVEETGRISREIEGRGFDSKGLSQGMPFIWTALNPAVNPFFLSI.

A signal peptide spans 1–17 (MRIGLLAFAVAARYVEA). Residues 23–48 (GEEVASSSAPTTLPSTSSSSALPSPT) show a composition bias toward low complexity. Residues 23-59 (GEEVASSSAPTTLPSTSSSSALPSPTKYTLPHEDPNP) form a disordered region. N-linked (GlcNAc...) asparagine glycosylation is found at Asn-109, Asn-119, and Asn-160. The region spanning 122-617 (LRDIQSHGGL…PAVNPFFLSI (496 aa)) is the Lipoxygenase domain. His-293, His-297, His-479, and Asn-483 together coordinate Mn(2+). Residue Asn-547 is glycosylated (N-linked (GlcNAc...) asparagine). Ile-617 is a Mn(2+) binding site.

This sequence belongs to the lipoxygenase family. Manganese lipoxygenase subfamily. The cofactor is Mn(2+).

It localises to the secreted. It catalyses the reaction (9Z,12Z)-octadecadienoate + O2 = (9S)-hydroperoxy-(10E,12Z)-octadecadienoate. The catalysed reaction is (9Z,12Z)-octadecadienoate + O2 = (11S)-hydroperoxy-(9Z,12Z)-octadecadienoate. The enzyme catalyses (9Z,12Z)-octadecadienoate + O2 = (13R)-hydroperoxy-(9Z,11E)-octadecadienoate. It carries out the reaction (9Z,12Z,15Z)-octadecatrienoate + O2 = (9S)-hydroperoxy-(10E,12Z,15Z)-octadecatrienoate. It catalyses the reaction (9Z,12Z,15Z)-octadecatrienoate + O2 = (11R)-hydroperoxy-(9Z,12Z,15Z)-octadecatrienoate. The catalysed reaction is (9Z,12Z,15Z)-octadecatrienoate + O2 = (13R)-hydroperoxy-(9Z,11E,15Z)-octadecatrienoate. Functionally, lipoxygenase that metabolizes linoleic and alpha-linolenic acids to 9S-, 11- and 13R-hydroperoxy fatty acids. At the end of lipoxygenation, the intermediate products 11S-HPODE and 13R-HPODE from linoleic acid are then transformed into 9S-HPODE as the final product. The intermediate product 11R-HPOTrE from alpha-linolenic acid is transformed into 9S-HPOTrE and 13R-HPOTrE as the final products. 9S-HPOTrE is further oxidized by the enzyme to 9,16-DiHOTrE as the end product. Also acts on gamma-linolenic acid producing 9-HOTrE(n-6) as the main metabolite. This chain is Manganese lipoxygenase, found in Nakataea oryzae (Rice stem rot fungus).